Here is a 951-residue protein sequence, read N- to C-terminus: Glycine dehydrogenase (decarboxylating) 1 (951 aa).

An N6-(pyridoxal phosphate)lysine modification is found at Lys-703.

The protein belongs to the GcvP family. In terms of assembly, the glycine cleavage system is composed of four proteins: P, T, L and H. Requires pyridoxal 5'-phosphate as cofactor.

The catalysed reaction is N(6)-[(R)-lipoyl]-L-lysyl-[glycine-cleavage complex H protein] + glycine + H(+) = N(6)-[(R)-S(8)-aminomethyldihydrolipoyl]-L-lysyl-[glycine-cleavage complex H protein] + CO2. In terms of biological role, the glycine cleavage system catalyzes the degradation of glycine. The P protein binds the alpha-amino group of glycine through its pyridoxal phosphate cofactor; CO(2) is released and the remaining methylamine moiety is then transferred to the lipoamide cofactor of the H protein. The sequence is that of Glycine dehydrogenase (decarboxylating) 1 from Pseudomonas fluorescens (strain ATCC BAA-477 / NRRL B-23932 / Pf-5).